A 147-amino-acid polypeptide reads, in one-letter code: Large ribosomal subunit protein uL15 (147 aa).

The interval 1–46 (MSIRLENLSYTPGARKEKHRKGRGHAAGKGKQAGRGQSGQKKRSTV) is disordered. A compositionally biased stretch (basic residues) spans 16–28 (KEKHRKGRGHAAG).

Belongs to the universal ribosomal protein uL15 family. Part of the 50S ribosomal subunit.

Binds to the 23S rRNA. This chain is Large ribosomal subunit protein uL15, found in Mesomycoplasma hyopneumoniae (strain 232) (Mycoplasma hyopneumoniae).